We begin with the raw amino-acid sequence, 527 residues long: Cytochrome P450 monooxyhenase eriA (527 aa).

Residues 17–37 (LGVVDLSLLGVGAVIAFAWLF) traverse the membrane as a helical segment. N-linked (GlcNAc...) asparagine glycosylation is found at Asn77, Asn274, and Asn297. Residue Cys453 coordinates heme.

Belongs to the cytochrome P450 family. Heme serves as cofactor.

The protein localises to the membrane. The enzyme catalyses cyathadiol + reduced [NADPH--hemoprotein reductase] + O2 = cyathatriol + oxidized [NADPH--hemoprotein reductase] + H2O + H(+). The protein operates within secondary metabolite biosynthesis. Its function is as follows. Cytochrome P450 monooxygenase; part of the gene cluster that mediates the biosynthesis of erinacines, cyathane-xylosides that show unique biological activities, including leishmanicidal activity, stimulating activity for nerve growth-factor synthesis, and agonistic activity toward the kappa opioid receptor. Within the pathway, eriA catalyzes C-11 hydroxylation in the presence of the short chain dehydrogenase/reductase (SDR) eriH, which leads to the production of cyathatriol. The first step of the erinacines biosynthesis pathway is catalyzed by the geranylgeranyl diphosphate (GGPP) synthase eriE via conversion of farnesyl pyrophosphate and isopentyl pyrophosphate into geranylgeranyl pyrophosphate (GGPP). GGPP is then substrate of the diterpene cyclase eriG for the production of cyatha-3,12-diene. The cytochrome P450 monooxygenase eriI then hydroxylates cyatha-3,12-diene at C-14 of the seven-membered ring to produce erinacol, which is further hydroxylated at C-15 by the cytochrome P450 monooxygenase eriC to yield cyathadiol. The cytochrome P450 monooxygenase eriA then catalyzes C-11 hydroxylation in the presence of the short chain dehydrogenase/reductase (SDR) eriH, which leads to the production of cyathatriol. The acetyltransferase eriL converts cyathatriol into 11-O-acetyl-cyathatriol. The SDR eriH catalyzes further oxidation of 11-O-acetyl-cyathatriol into 1-O-acetylcyathin A3. Finally, the glycosyl transferase eriJ tranfers xylose from UDP-xylose onto C-14 of 11-O-acetyl-cyathatriol to form eracine Q. EriJ is also able to convert 11-O-acetyl-cyathatriol to eracine Q2 by using UDP-D-glucose as cosubstrate, but at a lower rate. The protein is Cytochrome P450 monooxyhenase eriA of Hericium erinaceus (Lion's mane mushroom).